A 234-amino-acid polypeptide reads, in one-letter code: Carboxy-S-adenosyl-L-methionine synthase (234 aa).

Residues Tyr-35, Gly-60–Ser-62, Asp-83–Asn-84, and Arg-191 contribute to the S-adenosyl-L-methionine site.

Belongs to the class I-like SAM-binding methyltransferase superfamily. Cx-SAM synthase family. In terms of assembly, homodimer.

The enzyme catalyses prephenate + S-adenosyl-L-methionine = carboxy-S-adenosyl-L-methionine + 3-phenylpyruvate + H2O. Its function is as follows. Catalyzes the conversion of S-adenosyl-L-methionine (SAM) to carboxy-S-adenosyl-L-methionine (Cx-SAM). This chain is Carboxy-S-adenosyl-L-methionine synthase, found in Campylobacter lari (strain RM2100 / D67 / ATCC BAA-1060).